Consider the following 346-residue polypeptide: Phosphate acyltransferase (346 aa).

The protein belongs to the PlsX family. Homodimer. Probably interacts with PlsY.

It localises to the cytoplasm. It catalyses the reaction a fatty acyl-[ACP] + phosphate = an acyl phosphate + holo-[ACP]. It functions in the pathway lipid metabolism; phospholipid metabolism. Catalyzes the reversible formation of acyl-phosphate (acyl-PO(4)) from acyl-[acyl-carrier-protein] (acyl-ACP). This enzyme utilizes acyl-ACP as fatty acyl donor, but not acyl-CoA. The polypeptide is Phosphate acyltransferase (Geobacter sulfurreducens (strain ATCC 51573 / DSM 12127 / PCA)).